The chain runs to 22 residues: AVAGEKLWLLPHLLKMLLTPTP.

As to expression, expressed by the venom gland.

Its subcellular location is the secreted. Its function is as follows. Antibacterial peptide. Acts on the Mycobacterium abscessus subsp. massiliense cell wall. Reduces 40-50% of the bacterial load in macrophages infected with different M.abscessus strains. Is not cytotoxic towards mammalian cells, and shows no hemolytic activity against human erythrocytes. In vivo, reduces the bacterial load in the lungs, spleen, and liver of highly susceptible mice intravenously infected with M.abscessus. The chain is Polydim-I from Polybia dimorpha (Neotropical wasp).